Here is a 141-residue protein sequence, read N- to C-terminus: Hemoglobin subunit alpha (141 aa).

Positions 1–141 constitute a Globin domain; sequence VLSGTDKSNI…VSTVLTSKYR (141 aa). Ser-3 is subject to Phosphoserine. 2 positions are modified to N6-succinyllysine: Lys-7 and Lys-11. Lys-16 is subject to N6-acetyllysine; alternate. Residue Lys-16 is modified to N6-succinyllysine; alternate. The residue at position 24 (Tyr-24) is a Phosphotyrosine. Ser-35 is modified (phosphoserine). Lys-40 carries the post-translational modification N6-succinyllysine. Position 49 is a phosphoserine (Ser-49). His-58 provides a ligand contact to O2. His-87 lines the heme b pocket. Ser-102 is modified (phosphoserine). Thr-108 carries the phosphothreonine modification. At Ser-124 the chain carries Phosphoserine. A phosphothreonine mark is found at Thr-134 and Thr-137. A Phosphoserine modification is found at Ser-138.

Belongs to the globin family. In terms of assembly, heterotetramer of two alpha chains and two beta chains. As to expression, red blood cells.

Its function is as follows. Involved in oxygen transport from the lung to the various peripheral tissues. In terms of biological role, hemopressin acts as an antagonist peptide of the cannabinoid receptor CNR1. Hemopressin-binding efficiently blocks cannabinoid receptor CNR1 and subsequent signaling. This is Hemoglobin subunit alpha (HBA) from Talpa europaea (European mole).